Consider the following 372-residue polypeptide: GPN-loop GTPase 1 (372 aa).

Residue alanine 2 is modified to N-acetylalanine. A GTP-binding site is contributed by 29 to 34 (GSGKTT). The Gly-Pro-Asn (GPN)-loop; involved in dimer interface motif lies at 86–88 (GPN). 189–192 (NKTD) serves as a coordination point for GTP. Residues serine 301 and serine 314 each carry the phosphoserine modification. The disordered stretch occupies residues 303–372 (ALDPEAGKGN…ESMAHWKRNK (70 aa)). Threonine 328 bears the Phosphothreonine mark. Acidic residues predominate over residues 330–342 (DEEDEEADSDTDD). A Phosphoserine modification is found at serine 338. Threonine 340 is modified (phosphothreonine). Residues 343 to 355 (IDHRVTEESREEP) are compositionally biased toward basic and acidic residues.

Belongs to the GPN-loop GTPase family. In terms of assembly, heterodimer with GPN3. Binds to RNA polymerase II (RNAPII). Interacts directly with RNAPII subunits RPB4 and RPB7 and the CTD of RPB1. Interacts with XPA.

It localises to the cytoplasm. It is found in the nucleus. In terms of biological role, small GTPase required for proper nuclear import of RNA polymerase II (RNAPII). May act at an RNAP assembly step prior to nuclear import. Forms an interface between the RNA polymerase II enzyme and chaperone/scaffolding proteins, suggesting that it is required to connect RNA polymerase II to regulators of protein complex formation. May be involved in nuclear localization of XPA. The polypeptide is GPN-loop GTPase 1 (Mus musculus (Mouse)).